A 104-amino-acid polypeptide reads, in one-letter code: Large ribosomal subunit protein uL24 (104 aa).

The protein belongs to the universal ribosomal protein uL24 family. In terms of assembly, part of the 50S ribosomal subunit.

Its function is as follows. One of two assembly initiator proteins, it binds directly to the 5'-end of the 23S rRNA, where it nucleates assembly of the 50S subunit. One of the proteins that surrounds the polypeptide exit tunnel on the outside of the subunit. This Brevibacillus brevis (strain 47 / JCM 6285 / NBRC 100599) protein is Large ribosomal subunit protein uL24.